A 1353-amino-acid polypeptide reads, in one-letter code: Protein timeless homolog (1353 aa).

3 disordered regions span residues valine 798 to valine 825, lysine 1150 to aspartate 1291, and glycine 1306 to threonine 1335. Residues arginine 802–valine 825 are compositionally biased toward acidic residues. 2 stretches are compositionally biased toward basic and acidic residues: residues lysine 1150–glutamate 1160 and glutamate 1168–aspartate 1182. Acidic residues-rich tracts occupy residues phenylalanine 1183 to glutamate 1206 and aspartate 1217 to glutamate 1226. Basic and acidic residues predominate over residues glutamine 1227 to glutamate 1239. 3 stretches are compositionally biased toward acidic residues: residues aspartate 1261–glutamate 1273, alanine 1282–aspartate 1291, and glutamate 1323–aspartate 1332.

This sequence belongs to the timeless family. Associates with the cohesin complex. Interacts with smc-1, smc-3, scc-1 and scc-3.

The protein localises to the nucleus. Functionally, plays an important role in chromosome cohesion during both mitosis and meiosis. In prophase of meiosis, it is involved in the formation of the synaptonemal complex (SC) and specifically, in the diplotene and diakinesis phases of prophase, it stabilizes the association of homologous chromosomes during synapsis and sister chromatid cohesion. It regulates cohesin subunits to promote meiotic chromosome cohesion and localizes non-SMC (structural maintenance of chromosome) cohesin subunits to chromatin prior to or during pre-meiotic S phase. Implicated in influencing either the stability or loading of meiotic-specific cohesin subunit, rec8. Controls cell cycle exit and cell fusion to prevent the premature differentiation into adult cells. Specifically, regulates hypodermal seam cell identity. This chain is Protein timeless homolog, found in Caenorhabditis elegans.